The following is a 273-amino-acid chain: Non-homologous end joining protein Ku (273 aa).

Residues 13–190 (KLSLVTCPVA…FTGIEKKSDA (178 aa)) form the Ku domain. The tract at residues 227 to 251 (KKKAKKPSKAKASKSTKGDDEEKSN) is disordered. The span at 228–240 (KKAKKPSKAKASK) shows a compositional bias: basic residues.

The protein belongs to the prokaryotic Ku family. As to quaternary structure, homodimer. Interacts with LigD.

Functionally, with LigD forms a non-homologous end joining (NHEJ) DNA repair enzyme, which repairs dsDNA breaks with reduced fidelity. Binds linear dsDNA with 5'- and 3'- overhangs but not closed circular dsDNA nor ssDNA. Recruits and stimulates the ligase activity of LigD. This Allorhizobium ampelinum (strain ATCC BAA-846 / DSM 112012 / S4) (Agrobacterium vitis (strain S4)) protein is Non-homologous end joining protein Ku.